The sequence spans 393 residues: MTNSNRIKLTWISFLSYALTGALVIVTGMVMGNIADYFHLPVSSMSNTFTFLNAGILISIFLNAWLMEIVPLKTQLRFGFILMVLAVAGLMFSHSLALFSAAMFVLGLVSGITMSIGTFLITQLYEGRQRGSRLLFTDSFFSMAGMIFPMVAAFLLARSIEWYWVYACIGLVYLAIFILTFGCEFPALGKHAQHSQAPVVKEKWGIGVLFLAVAALCYILGQLGFISWVPEYAKGLGMSLNDAGALVSDFWMSYMFGMWAFSFILRFFDLQRILTVLAGMAAVLMYLFITGTQAHMPWFILTLGFFSSAIYTSIITLGSQQTKVASPKLVNFILTCGTIGTMLTFVVTGPIVAHSGPQAALLTANGLYAVVFVMCFALGFVSRHRQHSSPAAH.

Over 1-10 the chain is Cytoplasmic; sequence MTNSNRIKLT. Residues 11–31 form a helical membrane-spanning segment; it reads WISFLSYALTGALVIVTGMVM. Topologically, residues 32-50 are periplasmic; it reads GNIADYFHLPVSSMSNTFT. The helical transmembrane segment at 51 to 71 threads the bilayer; that stretch reads FLNAGILISIFLNAWLMEIVP. Topologically, residues 72-77 are cytoplasmic; it reads LKTQLR. A helical transmembrane segment spans residues 78–98; that stretch reads FGFILMVLAVAGLMFSHSLAL. Residues 99–100 are Periplasmic-facing; sequence FS. A helical transmembrane segment spans residues 101–121; it reads AAMFVLGLVSGITMSIGTFLI. Residues 122-133 lie on the Cytoplasmic side of the membrane; that stretch reads TQLYEGRQRGSR. The chain crosses the membrane as a helical span at residues 134-154; it reads LLFTDSFFSMAGMIFPMVAAF. The Periplasmic portion of the chain corresponds to 155–161; the sequence is LLARSIE. A helical membrane pass occupies residues 162-182; it reads WYWVYACIGLVYLAIFILTFG. Topologically, residues 183–205 are cytoplasmic; it reads CEFPALGKHAQHSQAPVVKEKWG. The helical transmembrane segment at 206-226 threads the bilayer; it reads IGVLFLAVAALCYILGQLGFI. At 227-244 the chain is on the periplasmic side; sequence SWVPEYAKGLGMSLNDAG. Residues 245 to 265 traverse the membrane as a helical segment; the sequence is ALVSDFWMSYMFGMWAFSFIL. At 266–272 the chain is on the cytoplasmic side; sequence RFFDLQR. The helical transmembrane segment at 273-293 threads the bilayer; sequence ILTVLAGMAAVLMYLFITGTQ. The Periplasmic segment spans residues 294-297; sequence AHMP. A helical membrane pass occupies residues 298–318; that stretch reads WFILTLGFFSSAIYTSIITLG. Residues 319 to 331 lie on the Cytoplasmic side of the membrane; that stretch reads SQQTKVASPKLVN. The chain crosses the membrane as a helical span at residues 332–352; it reads FILTCGTIGTMLTFVVTGPIV. At 353 to 360 the chain is on the periplasmic side; it reads AHSGPQAA. Residues 361 to 381 form a helical membrane-spanning segment; the sequence is LLTANGLYAVVFVMCFALGFV. Topologically, residues 382–393 are cytoplasmic; sequence SRHRQHSSPAAH.

Belongs to the major facilitator superfamily. TsgA family.

It localises to the cell inner membrane. The chain is Protein TsgA from Salmonella paratyphi A (strain ATCC 9150 / SARB42).